A 337-amino-acid chain; its full sequence is HTH-type transcriptional regulator MalR (337 aa).

The region spanning 1-56 (MVTIKDIAQAANVSTSTVSRVISGNPRISMQTREKVKATMKSFNYQPNRAARTLAT) is the HTH lacI-type domain. The segment at residues 4 to 23 (IKDIAQAANVSTSTVSRVIS) is a DNA-binding region (H-T-H motif).

Functionally, transcriptional repressor of the malA gene for maltase. The sequence is that of HTH-type transcriptional regulator MalR (malR) from Staphylococcus xylosus.